A 155-amino-acid polypeptide reads, in one-letter code: uncharacterized protein (155 aa).

An N-terminal signal peptide occupies residues 1-23 (MRLMRNLMNALLLGAAASSLAVA). The cysteines at positions 86 and 91 are disulfide-linked.

This sequence belongs to the ivy family.

The protein localises to the periplasm. This is an uncharacterized protein from Pseudomonas aeruginosa (strain ATCC 15692 / DSM 22644 / CIP 104116 / JCM 14847 / LMG 12228 / 1C / PRS 101 / PAO1).